The chain runs to 161 residues: Regulator of ribonuclease activity A (161 aa).

The protein belongs to the RraA family. In terms of assembly, homotrimer. Binds to both RNA-binding sites in the C-terminal region of Rne and to RhlB.

The protein resides in the cytoplasm. Globally modulates RNA abundance by binding to RNase E (Rne) and regulating its endonucleolytic activity. Can modulate Rne action in a substrate-dependent manner by altering the composition of the degradosome. Modulates RNA-binding and helicase activities of the degradosome. This chain is Regulator of ribonuclease activity A, found in Shewanella oneidensis (strain ATCC 700550 / JCM 31522 / CIP 106686 / LMG 19005 / NCIMB 14063 / MR-1).